The primary structure comprises 227 residues: Ubiquitin domain-containing protein 1 (227 aa).

Residues 1–35 (MGNCVGRQRRERPAAPGHPRKRAGRNEPLKKERLK) are disordered. The segment covering 24-35 (GRNEPLKKERLK) has biased composition (basic and acidic residues). Residues 149 to 224 (FPLKVRLSTG…IQVIINQPPP (76 aa)) enclose the Ubiquitin-like domain.

As to quaternary structure, interacts with UBTD1.

Functionally, may be involved in the regulation of cellular senescence through a positive feedback loop with TP53. Is a TP53 downstream target gene that increases the stability of TP53 protein by promoting the ubiquitination and degradation of MDM2. The polypeptide is Ubiquitin domain-containing protein 1 (UBTD1) (Homo sapiens (Human)).